A 217-amino-acid chain; its full sequence is Adenylate kinase (217 aa).

Residue 10-15 participates in ATP binding; the sequence is GAGKGT. The interval 30–59 is NMP; that stretch reads STGDMLRAAVKAESELGLQVKEVMASGGLV. Residues threonine 31, arginine 36, 57 to 59, 85 to 88, and glutamine 92 contribute to the AMP site; these read GLV and GFPR. An LID region spans residues 122-159; that stretch reads GRRVHEGSGRIYHVKYDPPKVEGKDDETGEALIQREDD. Residues arginine 123 and 132-133 each bind ATP; that span reads IY. Arginine 156 and arginine 167 together coordinate AMP. Residue glycine 203 participates in ATP binding.

It belongs to the adenylate kinase family. Monomer.

The protein resides in the cytoplasm. The catalysed reaction is AMP + ATP = 2 ADP. It functions in the pathway purine metabolism; AMP biosynthesis via salvage pathway; AMP from ADP: step 1/1. Its function is as follows. Catalyzes the reversible transfer of the terminal phosphate group between ATP and AMP. Plays an important role in cellular energy homeostasis and in adenine nucleotide metabolism. The polypeptide is Adenylate kinase (Marinobacter nauticus (strain ATCC 700491 / DSM 11845 / VT8) (Marinobacter aquaeolei)).